A 31-amino-acid polypeptide reads, in one-letter code: Ice-structuring glycoprotein 3 (31 aa).

O-linked (GalNAc...) threonine glycans are attached at residues T3, T6, T9, T12, T15, T18, T21, T24, T27, and T30.

O-linked glycans consist of Gal-GalNAc disaccharides. The three proteins may differ only in the number of repeating units of -Ala-Ala-Thr-.

It localises to the secreted. Its function is as follows. Antifreeze proteins lower the blood freezing point. This fish lives in antarctic waters where it experiences water temperatures near -1.9 degrees Celsius. Its blood has a freezing point of about -2.0 degrees Celsius, and 30% of the freezing-point depression is due mainly to the 3 major high molecular weight glycoproteins in the plasma. In Pagothenia borchgrevinki (Bald rockcod), this protein is Ice-structuring glycoprotein 3.